Reading from the N-terminus, the 189-residue chain is NADH dehydrogenase [ubiquinone] 1 beta subcomplex subunit 5, mitochondrial (189 aa).

The N-terminal 46 residues, 1-46, are a transit peptide targeting the mitochondrion; that stretch reads MAGMSLLRRVSVTAVAALSGRSLGTRLGFGGFLTRGFPKAVAPVRH. The helical transmembrane segment at 73–93 threads the bilayer; it reads FYIALTGIPVVIIITLVNVFI.

It belongs to the complex I NDUFB5 subunit family. Complex I is composed of 45 different subunits.

The protein resides in the mitochondrion inner membrane. Its function is as follows. Accessory subunit of the mitochondrial membrane respiratory chain NADH dehydrogenase (Complex I), that is believed not to be involved in catalysis. Complex I functions in the transfer of electrons from NADH to the respiratory chain. The immediate electron acceptor for the enzyme is believed to be ubiquinone. The sequence is that of NADH dehydrogenase [ubiquinone] 1 beta subcomplex subunit 5, mitochondrial (NDUFB5) from Macaca fascicularis (Crab-eating macaque).